The chain runs to 176 residues: Sigma intracellular receptor 2 (176 aa).

Residues M1–C9 lie on the Cytoplasmic side of the membrane. Residues V10–L30 form a helical membrane-spanning segment. Residues V10–L158 form the EXPERA domain. Residues Q31 to S68 lie on the Lumenal side of the membrane. The chain crosses the membrane as a helical span at residues F69–L89. Cholesterol is bound by residues V75 and Q77. The Cytoplasmic portion of the chain corresponds to K90–P99. Residues A100–F120 traverse the membrane as a helical segment. Topologically, residues E121–R140 are lumenal. The chain crosses the membrane as a helical span at residues L141–M161. Over L162–K176 the chain is Cytoplasmic. The ER retention motif signature appears at K172–K176.

It belongs to the TMEM97/sigma-2 receptor family. As to quaternary structure, homodimer. Interacts with NPC1; the interaction impairs NPC1-mediated cholesterol transport. Interacts with PGRMC1 and LDLR; the interaction increases LDL internalization. Interacts with histatin 1/HTN1; the interaction induces HTN1-stimulating wound healing. Interacts with TSPO.

The protein resides in the rough endoplasmic reticulum membrane. Its subcellular location is the nucleus membrane. Sigma-2 receptor which contributes to ameliorate dysfunctional cellular processes and slow degenerative progression by regulating cell functions including cholesterol biosynthesis/trafficking, membrane trafficking, autophagy, lipid membrane-bound protein trafficking, and receptor stabilization at the cell surface. Forms a ternary complex with PGRMC1 receptor and low density lipoprotein receptor/LDLR at the plasma membrane, which increases LDLR-mediated LDL cholesterol internalization. Decreases lysosomal sterol transporter NPC1 availability to the cell, probably through NPC1-binding, hence controlling lipid transport, including cholesterol and LBPA, outside of late endosome/lysosome. Binds regio- and stereoselective ligand 20(S)-hydroxycholesterol (20(S)-OHC) which enhances TMEM97-NPC1 interaction and decreases TMEM97-PGRMC1 and TMEM97-TSPO interactions, thereby linking OHC binding to cholesterol homeostasis. Also able to bind cholesterol. Binds histatin 1 (Hst 1)/HN1 salivary peptide at the ER membrane, which is critical for increasing mitochondria-ER contacts and stimulating Hst1 wound healing properties. May alter the activity of some cytochrome P450 proteins. Although shows homologies with sterol isomerases (EXPERA domain), not able to catalyze sterol isomerization. However, may act as sensors of these molecules. Acts as a quality control factor in the ER, promoting the proteolytic degradation of nonproductive and extramitochondrial precursor proteins in the ER membrane thus removing them from the ER surface. The protein is Sigma intracellular receptor 2 (Tmem97) of Macaca fascicularis (Crab-eating macaque).